Reading from the N-terminus, the 187-residue chain is dTTP/UTP pyrophosphatase (187 aa).

Asp-68 serves as the catalytic Proton acceptor.

It belongs to the Maf family. YhdE subfamily. It depends on a divalent metal cation as a cofactor.

The protein localises to the cytoplasm. The catalysed reaction is dTTP + H2O = dTMP + diphosphate + H(+). The enzyme catalyses UTP + H2O = UMP + diphosphate + H(+). Functionally, nucleoside triphosphate pyrophosphatase that hydrolyzes dTTP and UTP. May have a dual role in cell division arrest and in preventing the incorporation of modified nucleotides into cellular nucleic acids. In Thermus thermophilus (strain ATCC BAA-163 / DSM 7039 / HB27), this protein is dTTP/UTP pyrophosphatase.